The chain runs to 745 residues: TonB-dependent heme receptor A (745 aa).

The signal sequence occupies residues 1 to 24 (MNILINKRIFLLVTLVGIQLNVTA). The region spanning 45-157 (DDSNKLPGRS…FAGTVKFETK (113 aa)) is the TBDR plug domain. Residues 168–745 (KIGGFLKYGN…NIKFSLSQKF (578 aa)) form the TBDR beta-barrel domain.

This sequence belongs to the TonB-dependent receptor family.

Its subcellular location is the cell outer membrane. Its function is as follows. Heme receptor. This is TonB-dependent heme receptor A (tdhA) from Haemophilus influenzae (strain 86-028NP).